Here is a 441-residue protein sequence, read N- to C-terminus: Keratin, type I cytoskeletal 15 (441 aa).

A head region spans residues 2–91 (LLLGHASTST…GGSDLLLGTS (90 aa)). Residues 92 to 127 (GKEAMQNLNDRLASYLDKVRSLEGKNHELELKIKDW) form a coil 1A region. One can recognise an IF rod domain in the interval 92–407 (GKEAMQNLND…MLLDSEDSKG (316 aa)). Residues 128-149 (YSQVIPGTGGPDARDYGHLEKE) are linker 1. Residues 150–241 (IEDLQNKVNN…KNHEEDMKAA (92 aa)) are coil 1B. A linker 12 region spans residues 242 to 261 (SSGIAGQVNVELDAAPGTNL). The coil 2 stretch occupies residues 262–403 (LDELDACRRD…ATYRMLLDSE (142 aa)). The tract at residues 404 to 441 (DSKGSIINHKILTAIEKLVDGIVLSTEVLEKQIPVLSY) is tail.

It belongs to the intermediate filament family. In terms of assembly, heterotetramer of two type I and two type II keratins. As to expression, expressed in skin.

The protein is Keratin, type I cytoskeletal 15 (KRT15) of Protopterus aethiopicus (Marbled lungfish).